The primary structure comprises 581 residues: Kelch-like protein 30 (581 aa).

One can recognise a BTB domain in the interval 33–100 (ADVTLLVGDQ…VYTGRLTITQ (68 aa)). The 103-residue stretch at 135–237 (CLGICEFGEQ…PRPCVQQLLA (103 aa)) folds into the BACK domain. Kelch repeat units follow at residues 280 to 327 (EEDE…ALNS), 328 to 378 (DVYV…ALNG), 379 to 423 (EIYA…GCQG), 425 to 472 (LYLV…ALNG), 474 to 514 (LYLI…PLGD), and 515 to 564 (LLYV…TIFL).

This is Kelch-like protein 30 (Klhl30) from Mus musculus (Mouse).